Here is a 52-residue protein sequence, read N- to C-terminus: Histone H2A (52 aa).

Residues 1 to 25 (MSGRGKTGGKARAKAKTRSSRAGLQ) are disordered. Serine 2 carries the N-acetylserine modification. The residue at position 2 (serine 2) is a Phosphoserine. At lysine 6 the chain carries N6-(2-hydroxyisobutyryl)lysine. At lysine 6 the chain carries N6-acetyllysine. The segment covering 7-19 (TGGKARAKAKTRS) has biased composition (basic residues). Lysine 10 is subject to N6-(2-hydroxyisobutyryl)lysine; alternate. Lysine 10 carries the post-translational modification N6-lactoyllysine; alternate. Lysine 10 is modified (N6-succinyllysine). Glycyl lysine isopeptide (Lys-Gly) (interchain with G-Cter in ubiquitin) cross-links involve residues lysine 14 and lysine 16. Lysine 37 bears the N6-(2-hydroxyisobutyryl)lysine; alternate mark.

As to quaternary structure, the nucleosome is a histone octamer containing two molecules each of H2A, H2B, H3 and H4 assembled in one H3-H4 heterotetramer and two H2A-H2B heterodimers. The octamer wraps approximately 147 bp of DNA. Post-translationally, acetylation is not necessary for the antibacterial activity. In terms of processing, monoubiquitination in C-terminus gives a specific tag for epigenetic transcriptional repression. Following DNA double-strand breaks (DSBs), it is ubiquitinated through 'Lys-63' linkage of ubiquitin moieties, leading to the recruitment of repair proteins to sites of DNA damage. H2AK119Ub and ionizing radiation-induced 'Lys-63'-linked ubiquitination are distinct events. Phosphorylation on Ser-2 is enhanced during mitosis. Phosphorylation on Ser-2 directly represses transcription.

The protein resides in the nucleus. It localises to the chromosome. The protein localises to the secreted. Core component of nucleosome. Nucleosomes wrap and compact DNA into chromatin, limiting DNA accessibility to the cellular machineries which require DNA as a template. Histones thereby play a central role in transcription regulation, DNA repair, DNA replication and chromosomal stability. DNA accessibility is regulated via a complex set of post-translational modifications of histones, also called histone code, and nucleosome remodeling. In terms of biological role, hipposin shows strong antimicrobial activity against several Gram-positive and Gram-negative bacteria. The sequence is that of Histone H2A from Hippoglossus hippoglossus (Atlantic halibut).